The primary structure comprises 341 residues: Binder of USO1 and GRH1 protein 1 (341 aa).

The disordered stretch occupies residues 1-181 (MSEQESDEVK…AADDLFANDG (181 aa)). Ser-2 carries the post-translational modification N-acetylserine. A coiled-coil region spans residues 2 to 41 (SEQESDEVKRMKQLEEARKRVEELKKKKNKKNKGKKNKNS). A compositionally biased stretch (basic and acidic residues) spans 7 to 26 (DEVKRMKQLEEARKRVEELK). Basic residues predominate over residues 27–39 (KKKNKKNKGKKNK). Polar residues predominate over residues 69–78 (KANSTKSENN). Residues 79–91 (DQNDVDEESEEKE) are compositionally biased toward acidic residues. Phosphoserine is present on Ser-87. Over residues 118–132 (GKDDAENTKKEEVQE) the composition is skewed to basic and acidic residues. The segment covering 158–171 (VQTQEGNEPSNTSE) has biased composition (polar residues). Ser-170 is subject to Phosphoserine. Residues 188 to 272 (LTTIKKQKEE…LKLAEAKAAR (85 aa)) adopt a coiled-coil conformation. Thr-292 is modified (phosphothreonine).

Interacts with GRH1 (via C-terminus), probably forming a heterooligomer consisting of a GRH1 dimer and a BUG1 dimer.

It is found in the cytoplasm. The protein localises to the golgi apparatus. It localises to the cis-Golgi network membrane. In terms of biological role, involved in ER to Golgi vesicle-mediated transport by either facilitating USO1-dependent and -independent tethering or increasing target accuracy of fusion events of COPII-coated vesicles. In Saccharomyces cerevisiae (strain ATCC 204508 / S288c) (Baker's yeast), this protein is Binder of USO1 and GRH1 protein 1.